The primary structure comprises 407 residues: Nicotinate phosphoribosyltransferase (407 aa).

A Phosphohistidine; by autocatalysis modification is found at histidine 224.

The protein belongs to the NAPRTase family. Transiently phosphorylated on a His residue during the reaction cycle. Phosphorylation strongly increases the affinity for substrates and increases the rate of nicotinate D-ribonucleotide production. Dephosphorylation regenerates the low-affinity form of the enzyme, leading to product release.

The catalysed reaction is nicotinate + 5-phospho-alpha-D-ribose 1-diphosphate + ATP + H2O = nicotinate beta-D-ribonucleotide + ADP + phosphate + diphosphate. It functions in the pathway cofactor biosynthesis; NAD(+) biosynthesis; nicotinate D-ribonucleotide from nicotinate: step 1/1. Catalyzes the synthesis of beta-nicotinate D-ribonucleotide from nicotinate and 5-phospho-D-ribose 1-phosphate at the expense of ATP. The chain is Nicotinate phosphoribosyltransferase from Pseudomonas savastanoi pv. phaseolicola (strain 1448A / Race 6) (Pseudomonas syringae pv. phaseolicola (strain 1448A / Race 6)).